The sequence spans 529 residues: AAA ATPase forming ring-shaped complexes (529 aa).

Residues 15–62 (MERQDERLRSLSEANDRLMAKNHALAKALTRATQELTKAKAQLNQLAG) adopt a coiled-coil conformation. ATP is bound at residue 253-258 (GNGKTL).

This sequence belongs to the AAA ATPase family. Homohexamer. Assembles into a hexameric ring structure.

The protein is AAA ATPase forming ring-shaped complexes of Bifidobacterium dentium (strain ATCC 27534 / DSM 20436 / JCM 1195 / Bd1).